The sequence spans 323 residues: MSHTNVTIFHPAVFVLPGIPGLEAYHIWLSIPLCLIYITAVLGNSILIVVIVMERNLHVPMYFFLSMLAVMDILLSTTTVPKALAIFWLQAHNIAFDACVTQGFFVHMMFVGESAILLAMAFDRFVAICAPLRYTTVLTWPVVGRIALAVITRSFCIIFPVIFLLKRLPFCLTNIVPHSYCEHIGVARLACADITVNIWYGFSVPIVMVILDVILIAVSYSLILRAVFRLPSQDARHKALSTCGSHLCVILMFYVPSFFTLLTHHFGRNIPQHVHILLANLYVAVPPMLNPIVYGVKTKQIREGVAHRFFDIKTWCCTSPLGS.

Over 1–27 (MSHTNVTIFHPAVFVLPGIPGLEAYHI) the chain is Extracellular. N-linked (GlcNAc...) asparagine glycosylation occurs at Asn-5. A helical membrane pass occupies residues 28–48 (WLSIPLCLIYITAVLGNSILI). Residues 49–56 (VVIVMERN) are Cytoplasmic-facing. Residues 57–77 (LHVPMYFFLSMLAVMDILLST) form a helical membrane-spanning segment. Topologically, residues 78-101 (TTVPKALAIFWLQAHNIAFDACVT) are extracellular. A disulfide bridge links Cys-99 with Cys-191. Residues 102 to 122 (QGFFVHMMFVGESAILLAMAF) form a helical membrane-spanning segment. The Cytoplasmic segment spans residues 123–141 (DRFVAICAPLRYTTVLTWP). Residues 142–162 (VVGRIALAVITRSFCIIFPVI) form a helical membrane-spanning segment. Residues 163–198 (FLLKRLPFCLTNIVPHSYCEHIGVARLACADITVNI) lie on the Extracellular side of the membrane. Residues 199-219 (WYGFSVPIVMVILDVILIAVS) traverse the membrane as a helical segment. Residues 220–239 (YSLILRAVFRLPSQDARHKA) are Cytoplasmic-facing. The helical transmembrane segment at 240–260 (LSTCGSHLCVILMFYVPSFFT) threads the bilayer. The Extracellular portion of the chain corresponds to 261-275 (LLTHHFGRNIPQHVH). A helical transmembrane segment spans residues 276–296 (ILLANLYVAVPPMLNPIVYGV). The Cytoplasmic segment spans residues 297–323 (KTKQIREGVAHRFFDIKTWCCTSPLGS).

The protein belongs to the G-protein coupled receptor 1 family.

It localises to the cell membrane. In terms of biological role, odorant receptor. The sequence is that of Olfactory receptor 52B2 (OR52B2) from Homo sapiens (Human).